We begin with the raw amino-acid sequence, 665 residues long: MAGAAVLRRSARRIYRHLAAAPAFSRSVLQQPKRLLSSQSSPEHGARGAVSGSELALYPPERVRNFSIIAHVDHGKSTLADRLLELTGTIQKGHGQPQYLDKLQVERERGITVKAQTATMFYRHVSASQDSDTPKYLLNLIDTPGHVDFSYEVSRSLAACQGALLVVDAAQGVQAQTIANFYLAFESNLSIIPVINKIDQPTADPDNVKDQLKRLFDIDPSEALLTSAKTGQGLEQVLPAVIERIPSPPGKCDAPVRMLLLDSYYDEYKGVICHVAIVDGALRKGDKIASAATGRAYEVLDVGIMHPELKPTGVLYTGQVGYVISGMRSTKEARIGDTLHQAKSTVEPLPGFKPAKHMVFSGLYPADGSDFEALSHAIEKLTCNDASVSITKETSNALGMGFRCGFLGLLHMDVFHQRLEQEYGAQVISTIPTVPYIFEYGDGSKVQVENPAALASNPGKRVAACWEPTVIATIIIPSEYVGPVIMLCSERRGEQLEYTFIDAQRALLKYQLPLKEIIVDFYNELKGITSGYATFDYEDSEYQQSDLVKMDILLNGQPVDAMATIVHNQKAQRVGKELVEKLKKFIERQMFEITIQAAIGSKVIARETLSAMRKNVLAKCYGGDITRKKKLLEKQKEGKKRMKRVGSVDIPQEAFHELLKVSNSK.

A mitochondrion-targeting transit peptide spans 1 to 35 (MAGAAVLRRSARRIYRHLAAAPAFSRSVLQQPKRL). A disordered region spans residues 34–53 (RLLSSQSSPEHGARGAVSGS). The tr-type G domain occupies 61-249 (ERVRNFSIIA…AVIERIPSPP (189 aa)). GTP-binding positions include 70 to 77 (AHVDHGKS), 142 to 146 (DTPGH), and 196 to 199 (NKID).

Belongs to the TRAFAC class translation factor GTPase superfamily. Classic translation factor GTPase family. LepA subfamily.

It is found in the mitochondrion inner membrane. It catalyses the reaction GTP + H2O = GDP + phosphate + H(+). Promotes mitochondrial protein synthesis. May act as a fidelity factor of the translation reaction, by catalyzing a one-codon backward translocation of tRNAs on improperly translocated ribosomes. Binds to mitochondrial ribosomes in a GTP-dependent manner. This chain is Translation factor GUF1 homolog, mitochondrial, found in Sorghum bicolor (Sorghum).